A 186-amino-acid chain; its full sequence is Dynactin subunit 3 (186 aa).

An N-acetylalanine modification is found at Ala-2. Residues 46-66 are a coiled coil; that stretch reads NIASKRERVKILYKKIEDLIK.

It belongs to the dynactin subunit 3 family. Subunit of dynactin, a multiprotein complex part of a tripartite complex with dynein and a adapter, such as BICDL1, BICD2 or HOOK3. The dynactin complex is built around ACTR1A/ACTB filament and consists of an actin-related filament composed of a shoulder domain, a pointed end and a barbed end. Its length is defined by its flexible shoulder domain. The soulder is composed of 2 DCTN1 subunits, 4 DCTN2 and 2 DCTN3. The 4 DCNT2 (via N-terminus) bind the ACTR1A filament and act as molecular rulers to determine the length. The pointed end is important for binding dynein-dynactin cargo adapters. Consists of 4 subunits: ACTR10, DCNT4, DCTN5 and DCTN6. The barbed end is composed of a CAPZA1:CAPZB heterodimers, which binds ACTR1A/ACTB filament and dynactin and stabilizes dynactin.

It localises to the cytoplasm. The protein localises to the cytoskeleton. Its subcellular location is the microtubule organizing center. It is found in the centrosome. The protein resides in the chromosome. It localises to the centromere. The protein localises to the kinetochore. Its subcellular location is the spindle. It is found in the cleavage furrow. The protein resides in the midbody. Its function is as follows. Part of the dynactin complex that activates the molecular motor dynein for ultra-processive transport along microtubules. Together with dynein may be involved in spindle assembly and cytokinesis. This chain is Dynactin subunit 3, found in Mus musculus (Mouse).